Here is a 443-residue protein sequence, read N- to C-terminus: Thymidine phosphorylase (443 aa).

The protein belongs to the thymidine/pyrimidine-nucleoside phosphorylase family. Homodimer.

It carries out the reaction thymidine + phosphate = 2-deoxy-alpha-D-ribose 1-phosphate + thymine. It functions in the pathway pyrimidine metabolism; dTMP biosynthesis via salvage pathway; dTMP from thymine: step 1/2. The enzymes which catalyze the reversible phosphorolysis of pyrimidine nucleosides are involved in the degradation of these compounds and in their utilization as carbon and energy sources, or in the rescue of pyrimidine bases for nucleotide synthesis. The protein is Thymidine phosphorylase of Shewanella sp. (strain MR-4).